Reading from the N-terminus, the 318-residue chain is MLRHAVRGWLAEHLPGAAPAVAVALSGGADSLALTAAAVVEAATVDALVVDHGLQPGSDAVAVAAAAQARTLGCRSARVLRVRVGSDGGLEAAAREARYAALGSARAGLPVLLGHTLDDQAETVLLGLARGSGARSIRGMAAYTPPWGRPLLGVRRADTRRLCADLGLTPHEDPHNRSAEFTRVRLRTEVLPLLEDVLGGGVAEALARTGRQLREDGAVLDALAADLASAAADAGDLRIETLATAPAALRRRAVRAWLLDSGAKAPTDRQLRAIDALVTAWRGQGGVAVGGGTPGMRLVAARERGRLTLRRQARSPAR.

26–31 (SGGADS) is a binding site for ATP.

Belongs to the tRNA(Ile)-lysidine synthase family.

The protein localises to the cytoplasm. The catalysed reaction is cytidine(34) in tRNA(Ile2) + L-lysine + ATP = lysidine(34) in tRNA(Ile2) + AMP + diphosphate + H(+). In terms of biological role, ligates lysine onto the cytidine present at position 34 of the AUA codon-specific tRNA(Ile) that contains the anticodon CAU, in an ATP-dependent manner. Cytidine is converted to lysidine, thus changing the amino acid specificity of the tRNA from methionine to isoleucine. This is tRNA(Ile)-lysidine synthase from Nocardia farcinica (strain IFM 10152).